A 315-amino-acid chain; its full sequence is MSIPEVGKKIRVTVPSTTANLGPGFDCLGAALDLYNEFIFTRIEGGGDRFDLIMESTDGNHLRGGPENLVFRAAQKVWENANIDPFALEARVKLAVPPARGLGSSATAIVAGLIGANAIMNSPLSKEKLLELAIDIEGHPDNVVPSLLGGLCLTARSSSQRWRIIRCDWHYSIKAVVAIPAIRLSTSEARKVMPKNVPISDAVTNMGALTLLLNGLKAGNAELIKEGMFDKLHEPYRWKLIKGGLEVKDAALNAGALGCAISGAGPSILALCKEENGKNVSQAMVKAWENSGVASRAPFLNVQTTGSQFSTISGK.

97–107 (PPARGLGSSAT) is a binding site for ATP.

This sequence belongs to the GHMP kinase family. Homoserine kinase subfamily.

Its subcellular location is the cytoplasm. The enzyme catalyses L-homoserine + ATP = O-phospho-L-homoserine + ADP + H(+). It functions in the pathway amino-acid biosynthesis; L-threonine biosynthesis; L-threonine from L-aspartate: step 4/5. Its function is as follows. Catalyzes the ATP-dependent phosphorylation of L-homoserine to L-homoserine phosphate. In Prochlorococcus marinus (strain MIT 9215), this protein is Homoserine kinase.